The following is a 397-amino-acid chain: Myb family transcription factor PHL4 (397 aa).

The tract at residues 1–27 (MIPNDDDDANSMKNYPLNDDDANSMKN) is disordered. The HTH myb-type domain occupies 228-288 (AAAKGRMRWT…HLQKYRTAKY (61 aa)). The H-T-H motif DNA-binding region spans 259–284 (PKGVLKHMKVEGLTIFHVKSHLQKYR). Residues 319 to 339 (TETLRIQMEHQKKLHEQLESL) are coiled coil. The LHEQLE signature appears at 332-337 (LHEQLE). The segment at 359–397 (KQNMGFGGPEQGEKTSAKTPENGSEESESPRPKRPRNEE) is disordered. A compositionally biased stretch (basic and acidic residues) spans 386–397 (ESPRPKRPRNEE). Ser-387 carries the phosphoserine modification.

Belongs to the MYB-CC family.

It is found in the nucleus. Its function is as follows. Transcription factor involved in male gametophyte development. In Arabidopsis thaliana (Mouse-ear cress), this protein is Myb family transcription factor PHL4.